Here is a 1241-residue protein sequence, read N- to C-terminus: MIENWPKKPEGSQWTDDQWKAVVANGRDILVAAAAGSGKTAVLVERIIKKIINEENPVDVDRLLVVTFTNAAAQEMKNRIGEALEKVLIDEPGSQHIRKQLSLLNKASISTIHSFCLQVIRGYYYMLDVDPRFRIANQTENELLKEEVLDDILEEEYGIEDNTIFFELVDRYTSDRSDDDLQRMILALHTESRAHPNPEKWLDKLVEAYDVEGKTIEDLVYASYLLEDVKFQLETAEQHIRKATELAMLPDGPAPRVETLQADLALLGTLSSAARESWTSVYEAMQNVSWQTLKRIKKSDYNEDVVKQVDSLRNKAKDEVKKLQEELFSRKPESFLRDFQDMHPVLEKLVQLVKVFTERFQAMKRDKGMVDFTDLEHFCLQILSEQSEEGEMKPSAVALQYRNKFAEVLVDEYQDTNFVQESIIKFVTKDSESEGNLFMVGDVKQSIYRFRLAEPGLFLGKYKRFTQEGLGGGMKIDLAKNFRSRHEVLAGTNFIFKQIMGEEVGEIDYDADAELKLGASYPEGEDVAAELLCIQQTEEEVIDGEEGAEVEKAQLEARLMAQRIKAMVDSGYEVYDRKTDSMRPVQYRDFVILLRSMPWAPQIMEELKLQGIPVYADLATGYFEATEVNIMMNVFRVIDNPMQDIPLAAVLRSPIVGLNDEELATLRAHGKKGSFYEVMSSFLKGAPLEEEKELHDKLEWFYNLLQGWREFARQQSLSDLIWKVYGETGYYDFVGGLPAGKQRQANLRVLYDRARQYEATSFRGLFRFLRFIERILERGDDMGTARALGEQEDVVRIMTIHKSKGLEFPVVFVAGLGRRFNTQDLMKRFLLHKDFGFGSQFIDPRKRIKYTTLSQLAIKRKMKMELIAEEMRVLYVALTRAKEKLILIGTVKDATKEMEKWLDAREHSEWLLPDHIRAGASCYLDWIAPSLYRHRDSEILLELGQGSVPDEIYGYDTSWKVEVVDGNTLLAPEPVQEEKQELLEALREKKAVPLESERKEEVYDRLMWKYGYEEATSHRAKQSVTEIKRNYQSEEGSDNAFIKKLRAPIRTRPRFMEKKGLTYAERGTAVHAVMQHVDLKKPITEEVIREQIAGMVNKELLTFEQAEEIAIEKVISFFDSDLGKRVLAAKSVEREVPFTMMLAAEEAYQDWQGQSGESILVQGVIDCMIEEEDGITLIDFKTDTIEGKFPGGFEQAKPILEERYKVQLSLYAKALEKSLQHPVKEKCLYFFDGNHVVKIEE.

The UvrD-like helicase ATP-binding domain maps to serine 12–arginine 485. Alanine 33–threonine 40 provides a ligand contact to ATP. A UvrD-like helicase C-terminal domain is found at glycine 505–glycine 805.

Belongs to the helicase family. AddA subfamily. In terms of assembly, heterodimer of AddA and AddB/RexB. Mg(2+) serves as cofactor.

It catalyses the reaction Couples ATP hydrolysis with the unwinding of duplex DNA by translocating in the 3'-5' direction.. The enzyme catalyses ATP + H2O = ADP + phosphate + H(+). The heterodimer acts as both an ATP-dependent DNA helicase and an ATP-dependent, dual-direction single-stranded exonuclease. Recognizes the chi site generating a DNA molecule suitable for the initiation of homologous recombination. The AddA nuclease domain is required for chi fragment generation; this subunit has the helicase and 3' -&gt; 5' nuclease activities. This chain is ATP-dependent helicase/nuclease subunit A, found in Bacillus cereus (strain Q1).